The sequence spans 57 residues: Large ribosomal subunit protein bL32 (57 aa).

Over residues 1 to 19 the composition is skewed to basic residues; the sequence is MAVPKRRMSRANTRSRRAQ. The interval 1–20 is disordered; that stretch reads MAVPKRRMSRANTRSRRAQW.

The protein belongs to the bacterial ribosomal protein bL32 family.

This Mycolicibacterium smegmatis (strain ATCC 700084 / mc(2)155) (Mycobacterium smegmatis) protein is Large ribosomal subunit protein bL32.